A 525-amino-acid chain; its full sequence is GMP synthase [glutamine-hydrolyzing] (525 aa).

Residues 9 to 207 (KILILDFGSQ…IVDICGCDTL (199 aa)) enclose the Glutamine amidotransferase type-1 domain. The Nucleophile role is filled by Cys86. Residues His181 and Glu183 contribute to the active site. The GMPS ATP-PPase domain occupies 208 to 400 (WTPANIAQDA…LGLPYDMVYR (193 aa)). 235-241 (SGGVDSS) is a binding site for ATP.

Homodimer.

It carries out the reaction XMP + L-glutamine + ATP + H2O = GMP + L-glutamate + AMP + diphosphate + 2 H(+). Its pathway is purine metabolism; GMP biosynthesis; GMP from XMP (L-Gln route): step 1/1. Functionally, catalyzes the synthesis of GMP from XMP. The polypeptide is GMP synthase [glutamine-hydrolyzing] (Marinomonas sp. (strain MWYL1)).